Consider the following 376-residue polypeptide: Succinyl-diaminopimelate desuccinylase (376 aa).

Position 74 (H74) interacts with Zn(2+). D76 is a catalytic residue. D105 provides a ligand contact to Zn(2+). The active-site Proton acceptor is the E135. Zn(2+) contacts are provided by E136, E164, and H349.

It belongs to the peptidase M20A family. DapE subfamily. Homodimer. Requires Zn(2+) as cofactor. It depends on Co(2+) as a cofactor.

The enzyme catalyses N-succinyl-(2S,6S)-2,6-diaminopimelate + H2O = (2S,6S)-2,6-diaminopimelate + succinate. Its pathway is amino-acid biosynthesis; L-lysine biosynthesis via DAP pathway; LL-2,6-diaminopimelate from (S)-tetrahydrodipicolinate (succinylase route): step 3/3. In terms of biological role, catalyzes the hydrolysis of N-succinyl-L,L-diaminopimelic acid (SDAP), forming succinate and LL-2,6-diaminopimelate (DAP), an intermediate involved in the bacterial biosynthesis of lysine and meso-diaminopimelic acid, an essential component of bacterial cell walls. This is Succinyl-diaminopimelate desuccinylase from Zymomonas mobilis subsp. mobilis (strain ATCC 31821 / ZM4 / CP4).